Here is a 346-residue protein sequence, read N- to C-terminus: 3-isopropylmalate dehydrogenase (346 aa).

Position 76-87 (76-87) interacts with NAD(+); the sequence is GPQWTDPNNRPE. 4 residues coordinate substrate: arginine 94, arginine 104, arginine 132, and aspartate 217. Residues aspartate 217, aspartate 241, and aspartate 245 each contribute to the Mg(2+) site. 275-287 is an NAD(+) binding site; that stretch reads GSAPDIANQNLAN.

The protein belongs to the isocitrate and isopropylmalate dehydrogenases family. LeuB type 1 subfamily. As to quaternary structure, homodimer. The cofactor is Mg(2+). Mn(2+) is required as a cofactor.

The protein resides in the cytoplasm. The catalysed reaction is (2R,3S)-3-isopropylmalate + NAD(+) = 4-methyl-2-oxopentanoate + CO2 + NADH. It participates in amino-acid biosynthesis; L-leucine biosynthesis; L-leucine from 3-methyl-2-oxobutanoate: step 3/4. Functionally, catalyzes the oxidation of 3-carboxy-2-hydroxy-4-methylpentanoate (3-isopropylmalate) to 3-carboxy-4-methyl-2-oxopentanoate. The product decarboxylates to 4-methyl-2 oxopentanoate. The protein is 3-isopropylmalate dehydrogenase of Staphylococcus haemolyticus (strain JCSC1435).